Here is a 354-residue protein sequence, read N- to C-terminus: MAELLRSLRDSQLVARFQRRCGLFPAREASGEEHVVKNYFYYYLFRFSAALGQEVFYITFLPFTHWNIDPNLSRRLVVIWVLVMYIGQVAKDILKWPRPSFPPVVRLEKRIIAEYGMPSTHAMAATAISFTLLISTMDRYQYPFILGLMMAVVFSTLVCLSRLYTGMHTVLDILGGVLITAVLIALTYPAWTLIDSLDSASPLFPVCVIVVPFLLCYNYPVSDYYSPTRADTTTIVAAGAGVTLGFWINHFFQLVSKPTPSLPVIQNIPPLTTDMLVLGLTKFMVGIMLILLVRQLVQKLSLQVLFSWFKVVTRNKEARRRLEIEVPYKFVTYTSVGICATTFVPMLHRFLGLL.

Helical transmembrane passes span 43-63 (YLFR…FLPF), 76-96 (LVVI…ILKW), 115-135 (YGMP…LLIS), and 140-160 (YQYP…LVCL). Residues 91-99 (KDILKWPRP) form a phosphatase sequence motif I region. The phosphatase sequence motif II stretch occupies residues 118–121 (PSTH). The Proton donor role is filled by His121. The tract at residues 161–172 (SRLYTGMHTVLD) is phosphatase sequence motif III. The Nucleophile role is filled by His168. 5 helical membrane-spanning segments follow: residues 173 to 193 (ILGG…AWTL), 202 to 222 (PLFP…YPVS), 235 to 255 (IVAA…FQLV), 273 to 293 (TDML…ILLV), and 334 to 354 (TSVG…LGLL).

It belongs to the type 2 lipid phosphate phosphatase family. In terms of tissue distribution, highly expressed in pancreatic islets. Expressed in lung, small interstince, colon, kideny and brain.

It is found in the endoplasmic reticulum membrane. The enzyme catalyses sphinganine 1-phosphate + H2O = sphinganine + phosphate. It catalyses the reaction sphing-4-enine 1-phosphate + H2O = sphing-4-enine + phosphate. It carries out the reaction (4R)-hydroxysphinganine 1-phosphate + H2O = (4R)-hydroxysphinganine + phosphate. Functionally, has specific phosphohydrolase activity towards sphingoid base 1-phosphates. Has high phosphohydrolase activity against dihydrosphingosine-1-phosphate and sphingosine-1-phosphate (S1P) in vitro. Sphingosine-1-phosphate phosphatase activity is needed for efficient recycling of sphingosine into the sphingolipid synthesis pathway. May play a role in attenuating intracellular sphingosine 1-phosphate (S1P) signaling. May play a role in pro-inflammatory signaling. Plays a role in the regulation of pancreatic islet beta-cell endoplasmic reticulum stress and proliferation. The polypeptide is Sphingosine-1-phosphate phosphatase 2 (Mus musculus (Mouse)).